A 295-amino-acid polypeptide reads, in one-letter code: (R)-phenoxypropionate/alpha-ketoglutarate-dioxygenase (295 aa).

2 residues coordinate Fe cation: histidine 111 and aspartate 113. Residues threonine 138 and tryptophan 255 each coordinate 2-oxoglutarate. Histidine 270 provides a ligand contact to Fe cation. Arginine 281 is a binding site for 2-oxoglutarate.

This sequence belongs to the TfdA dioxygenase family. In terms of assembly, homotrimer. Fe cation serves as cofactor. It depends on L-ascorbate as a cofactor.

It catalyses the reaction (R)-2-(4-chloro-2-methylphenoxy)propanoate + 2-oxoglutarate + O2 = 2-methyl-4-chlorophenol + pyruvate + succinate + CO2. It carries out the reaction (R)-(2,4-dichlorophenoxy)propanoate + 2-oxoglutarate + O2 = 2,4-dichlorophenol + pyruvate + succinate + CO2. It functions in the pathway xenobiotic degradation; 2-(2,4-dichlorophenoxy)propanoate degradation. Its activity is regulated as follows. Inhibited by divalent cations, most significantly by copper and nickel, and by diethylpyrocarbonate (DEPC). Functionally, involved in the degradation of the phenoxypropionate herbicides. Catalyzes the enantiospecific cleavage of the ether bond in the herbicid R-dichlorprop ((R)-2-(2,4-dichlorophenoxy)propionate)(R-2,4-DP) and R-mecoprop ((R)-2-(4-chloro-2-methylphenoxy)propionate)(R-2,4-MCPP). It can also accept (RS)-2-(2,4,5-trichlorophenoxy)propionate, (RS)-2-(4-chlorophenoxy)propionate, (RS)-2-(m-chlorophenoxy)propionate, however it can only accept 2-oxoglutarate as oxygen acceptor. This is (R)-phenoxypropionate/alpha-ketoglutarate-dioxygenase from Delftia acidovorans (Pseudomonas acidovorans).